Consider the following 293-residue polypeptide: ATP synthase gamma chain (293 aa).

The protein belongs to the ATPase gamma chain family. F-type ATPases have 2 components, CF(1) - the catalytic core - and CF(0) - the membrane proton channel. CF(1) has five subunits: alpha(3), beta(3), gamma(1), delta(1), epsilon(1). CF(0) has three main subunits: a, b and c.

It is found in the cell inner membrane. Functionally, produces ATP from ADP in the presence of a proton gradient across the membrane. The gamma chain is believed to be important in regulating ATPase activity and the flow of protons through the CF(0) complex. This is ATP synthase gamma chain from Beijerinckia indica subsp. indica (strain ATCC 9039 / DSM 1715 / NCIMB 8712).